Here is a 126-residue protein sequence, read N- to C-terminus: Protein mmf2, mitochondrial (126 aa).

Belongs to the RutC family.

The protein resides in the mitochondrion. The protein localises to the cytoplasm. Its function is as follows. Plays a role in the maintenance of mitochondrial DNA. This chain is Protein mmf2, mitochondrial (mmf2), found in Schizosaccharomyces pombe (strain 972 / ATCC 24843) (Fission yeast).